We begin with the raw amino-acid sequence, 782 residues long: Ribosome biogenesis protein ERB1 (782 aa).

2 disordered regions span residues 1–123 and 339–361; these read MGSK…RIEK and PEEY…EDRE. The segment covering 35-86 has biased composition (acidic residues); the sequence is SEDEEDYLPSDDDDDVEDSENEGTGASEDDDDDDDDDDILSDDIPSDVDSEE. The segment covering 105–123 has biased composition (basic and acidic residues); the sequence is VDPKREEDDGADRNYRIEK. WD repeat units follow at residues 433–472, 476–516, 567–609, 612–650, 653–692, 696–736, and 752–782; these read GHEG…QVWS, NSEE…VTPA, TVRS…TQIP, KLSG…LVKV, PGAK…RPYK, FHGQ…DQLE, and VSKL…RLWM.

The protein belongs to the WD repeat BOP1/ERB1 family. As to quaternary structure, component of the NOP7 complex, composed of ERB1, NOP7 and YTM1. The complex is held together by ERB1, which interacts with NOP7 via its N-terminal domain and with YTM1 via a high-affinity interaction between the seven-bladed beta-propeller domains of the 2 proteins. The NOP7 complex associates with the 66S pre-ribosome.

Its subcellular location is the nucleus. The protein localises to the nucleolus. It is found in the nucleoplasm. In terms of biological role, component of the NOP7 complex, which is required for maturation of the 25S and 5.8S ribosomal RNAs and formation of the 60S ribosome. This is Ribosome biogenesis protein ERB1 from Chaetomium globosum (strain ATCC 6205 / CBS 148.51 / DSM 1962 / NBRC 6347 / NRRL 1970) (Soil fungus).